We begin with the raw amino-acid sequence, 253 residues long: Triosephosphate isomerase (253 aa).

Residue 9–11 (NWK) participates in substrate binding. Catalysis depends on histidine 97, which acts as the Electrophile. The active-site Proton acceptor is the glutamate 169. Residues glycine 175, serine 215, and 236-237 (GG) contribute to the substrate site.

The protein belongs to the triosephosphate isomerase family. In terms of assembly, homodimer.

The protein resides in the cytoplasm. The enzyme catalyses D-glyceraldehyde 3-phosphate = dihydroxyacetone phosphate. It functions in the pathway carbohydrate biosynthesis; gluconeogenesis. The protein operates within carbohydrate degradation; glycolysis; D-glyceraldehyde 3-phosphate from glycerone phosphate: step 1/1. Involved in the gluconeogenesis. Catalyzes stereospecifically the conversion of dihydroxyacetone phosphate (DHAP) to D-glyceraldehyde-3-phosphate (G3P). This chain is Triosephosphate isomerase, found in Staphylococcus haemolyticus (strain JCSC1435).